Here is a 345-residue protein sequence, read N- to C-terminus: Serine/arginine-rich splicing factor 6 (345 aa).

The RRM 1 domain occupies 1–72; it reads MPRVYIGRLS…ERVIVEHARG (72 aa). Phosphoserine occurs at positions 45, 81, and 84. The interval 75 to 102 is disordered; it reads RDRDGYSYGSRSGGGGYSSRRTSGRDKY. The RRM 2 domain occupies 110-183; sequence FRLIVENLSS…RNIRLIEDKP (74 aa). N6-acetyllysine is present on Lys-165. A disordered region spans residues 176 to 345; the sequence is IRLIEDKPRT…RSRSRSSSRD (170 aa). Residue Lys-182 forms a Glycyl lysine isopeptide (Lys-Gly) (interchain with G-Cter in SUMO2) linkage. Residues 185 to 250 are compositionally biased toward basic residues; the sequence is TSHRRSYSGS…RKSRSKSKSK (66 aa). 2 stretches are compositionally biased toward basic and acidic residues: residues 264–273 and 282–293; these read RSKDEYEKSR and SPKENGKGDIKS. 2 positions are modified to phosphoserine: Ser-299 and Ser-301. At Ser-305 the chain carries Phosphoserine; by DYRK1A. Residues Ser-316 and Ser-318 each carry the phosphoserine modification. Positions 323-345 are enriched in basic residues; the sequence is RASRSHSRSRSKSRSRSRSSSRD.

Belongs to the splicing factor SR family. Binds SREK1/SFRS12. Interacts with DYRK1A. Post-translationally, extensively phosphorylated on serine residues in the RS domain. Phosphorylated by DYRK1A, probably in the RS domain. Phosphorylation by DYRK1A modulates alternative splice site selection and inhibits the expression of MAPT/Tau exon 10.

It is found in the nucleus. The protein localises to the nucleus speckle. Its function is as follows. Plays a role in constitutive splicing and modulates the selection of alternative splice sites. Plays a role in the alternative splicing of MAPT/Tau exon 10. Binds to alternative exons of TNC pre-mRNA and promotes the expression of alternatively spliced TNC. Plays a role in wound healing and in the regulation of keratinocyte differentiation and proliferation via its role in alternative splicing. The chain is Serine/arginine-rich splicing factor 6 (SRSF6) from Bos taurus (Bovine).